Reading from the N-terminus, the 117-residue chain is Ribosome-binding factor A (117 aa).

This sequence belongs to the RbfA family. In terms of assembly, monomer. Binds 30S ribosomal subunits, but not 50S ribosomal subunits or 70S ribosomes.

Its subcellular location is the cytoplasm. One of several proteins that assist in the late maturation steps of the functional core of the 30S ribosomal subunit. Associates with free 30S ribosomal subunits (but not with 30S subunits that are part of 70S ribosomes or polysomes). Required for efficient processing of 16S rRNA. May interact with the 5'-terminal helix region of 16S rRNA. The sequence is that of Ribosome-binding factor A from Nitrosomonas europaea (strain ATCC 19718 / CIP 103999 / KCTC 2705 / NBRC 14298).